A 94-amino-acid polypeptide reads, in one-letter code: Conotoxin Gla-MrII (94 aa).

A signal peptide spans 1-25 (MFGHTSVSFLLLSIVALGMVATVIC). 4-carboxyglutamate is present on residues E30, E34, E37, E40, and E41. A propeptide spanning residues 78-94 (STHMQKRFLRMPRDLAD) is cleaved from the precursor.

It belongs to the conotoxin I2 superfamily. Post-translationally, contains 4 disulfide bonds. As to expression, expressed by the venom duct.

The protein localises to the secreted. This is Conotoxin Gla-MrII from Conus marmoreus (Marble cone).